An 870-amino-acid polypeptide reads, in one-letter code: DNA mismatch repair protein MutS (870 aa).

617 to 624 (GPNMAGKS) lines the ATP pocket.

Belongs to the DNA mismatch repair MutS family.

Its function is as follows. This protein is involved in the repair of mismatches in DNA. It is possible that it carries out the mismatch recognition step. This protein has a weak ATPase activity. The chain is DNA mismatch repair protein MutS from Phocaeicola vulgatus (strain ATCC 8482 / DSM 1447 / JCM 5826 / CCUG 4940 / NBRC 14291 / NCTC 11154) (Bacteroides vulgatus).